Reading from the N-terminus, the 59-residue chain is Large ribosomal subunit protein uL30 (59 aa).

The protein belongs to the universal ribosomal protein uL30 family. As to quaternary structure, part of the 50S ribosomal subunit.

This chain is Large ribosomal subunit protein uL30, found in Bacillus subtilis (strain 168).